A 157-amino-acid chain; its full sequence is MSRRNAAEKRPVLPDPQFNSRLATMIVARLMKHGKKSTAQRILSDAFQLISQRSNGADPLEVFETAVRNATPLVEVRARRVGGATYQVPMEVRQERGTAMALRWLVNFSRTRNGRSMAQKLAGELIDAANEAGNTVRKREETHKMAEANKAFAHYRY.

This sequence belongs to the universal ribosomal protein uS7 family. Part of the 30S ribosomal subunit.

The protein localises to the plastid. The protein resides in the organellar chromatophore. In terms of biological role, one of the primary rRNA binding proteins, it binds directly to 16S rRNA where it nucleates assembly of the head domain of the 30S subunit. The protein is Small ribosomal subunit protein uS7c (rps7) of Paulinella chromatophora.